The primary structure comprises 331 residues: Adenine deaminase (331 aa).

Zn(2+) contacts are provided by H17, H19, and H197. E200 functions as the Proton donor in the catalytic mechanism. Position 278 (D278) interacts with Zn(2+). Position 279 (D279) interacts with substrate.

The protein belongs to the metallo-dependent hydrolases superfamily. Adenosine and AMP deaminases family. Adenine deaminase type 2 subfamily. It depends on Zn(2+) as a cofactor.

The catalysed reaction is adenine + H2O + H(+) = hypoxanthine + NH4(+). Functionally, catalyzes the hydrolytic deamination of adenine to hypoxanthine. Plays an important role in the purine salvage pathway and in nitrogen catabolism. This is Adenine deaminase from Wolinella succinogenes (strain ATCC 29543 / DSM 1740 / CCUG 13145 / JCM 31913 / LMG 7466 / NCTC 11488 / FDC 602W) (Vibrio succinogenes).